Consider the following 274-residue polypeptide: ATP synthase subunit a (274 aa).

Helical transmembrane passes span 44 to 64, 110 to 130, 142 to 164, 212 to 232, and 243 to 263; these read VDSM…FYMV, FIWV…FPFI, IVPS…LILF, LFGN…LLPW, and AIFH…LTIV.

This sequence belongs to the ATPase A chain family. As to quaternary structure, F-type ATPases have 2 components, CF(1) - the catalytic core - and CF(0) - the membrane proton channel. CF(1) has five subunits: alpha(3), beta(3), gamma(1), delta(1), epsilon(1). CF(0) has three main subunits: a(1), b(2) and c(9-12). The alpha and beta chains form an alternating ring which encloses part of the gamma chain. CF(1) is attached to CF(0) by a central stalk formed by the gamma and epsilon chains, while a peripheral stalk is formed by the delta and b chains.

Its subcellular location is the cell membrane. Functionally, key component of the proton channel; it plays a direct role in the translocation of protons across the membrane. This Buchnera aphidicola subsp. Acyrthosiphon pisum (strain APS) (Acyrthosiphon pisum symbiotic bacterium) protein is ATP synthase subunit a.